The following is a 366-amino-acid chain: DNA-directed RNA polymerase subunit alpha (366 aa).

The tract at residues 1–260 (MAISDNGGGS…DQLQSFIGSE (260 aa)) is alpha N-terminal domain (alpha-NTD). Residues 274–366 (EGALPYDHNL…ENLSKQYSED (93 aa)) form an alpha C-terminal domain (alpha-CTD) region.

The protein belongs to the RNA polymerase alpha chain family. In terms of assembly, homodimer. The RNAP catalytic core consists of 2 alpha, 1 beta, 1 beta' and 1 omega subunit. When a sigma factor is associated with the core the holoenzyme is formed, which can initiate transcription.

The catalysed reaction is RNA(n) + a ribonucleoside 5'-triphosphate = RNA(n+1) + diphosphate. Functionally, DNA-dependent RNA polymerase catalyzes the transcription of DNA into RNA using the four ribonucleoside triphosphates as substrates. The polypeptide is DNA-directed RNA polymerase subunit alpha (Anaplasma marginale (strain St. Maries)).